The following is a 1059-amino-acid chain: Disks large-associated protein 2 (1059 aa).

2 disordered regions span residues 31–56 (GEPE…EEDI) and 244–311 (TKSH…SDST). Over residues 244 to 261 (TKSHSLEGSSKSNINGTK) the composition is skewed to polar residues. Positions 262 to 271 (SEGRMDDHHQ) are enriched in basic and acidic residues. Over residues 272 to 285 (SHLSKHSKRSKSKE) the composition is skewed to basic residues. A phosphoserine mark is found at Ser-302, Ser-308, Ser-390, and Ser-456. Disordered regions lie at residues 446–466 (GDEE…VALR) and 632–669 (VTAQ…NSMD). Polar residues predominate over residues 632 to 645 (VTAQSSTESTQDAY). 4 positions are modified to phosphoserine: Ser-667, Ser-670, Ser-673, and Ser-720. The interval 723–756 (VQDSEFPDHQPYPRSDVETATDSDTESRGLREYH) is disordered. Position 743 is a phosphothreonine (Thr-743). Phosphoserine is present on Ser-745. Basic and acidic residues predominate over residues 747–756 (TESRGLREYH). A phosphoserine mark is found at Ser-776, Ser-811, Ser-983, and Ser-1012. Positions 985-1024 (ERKEERKIPPPIPKKPPKGKFPITREKSLDLPDRQRQEAR) are disordered. Residues 1007 to 1024 (ITREKSLDLPDRQRQEAR) show a composition bias toward basic and acidic residues.

This sequence belongs to the SAPAP family. Interacts with DLG4/PSD-95. As to expression, expressed in various brain areas.

The protein resides in the cell membrane. Its subcellular location is the postsynaptic density. The protein localises to the synapse. Functionally, may play a role in the molecular organization of synapses and neuronal cell signaling. Could be an adapter protein linking ion channel to the subsynaptic cytoskeleton. May induce enrichment of PSD-95/SAP90 at the plasma membrane. The chain is Disks large-associated protein 2 from Rattus norvegicus (Rat).